Consider the following 357-residue polypeptide: Peptide chain release factor 1 (357 aa).

N5-methylglutamine is present on Q233.

It belongs to the prokaryotic/mitochondrial release factor family. In terms of processing, methylated by PrmC. Methylation increases the termination efficiency of RF1.

The protein resides in the cytoplasm. Peptide chain release factor 1 directs the termination of translation in response to the peptide chain termination codons UAG and UAA. The polypeptide is Peptide chain release factor 1 (Flavobacterium psychrophilum (strain ATCC 49511 / DSM 21280 / CIP 103535 / JIP02/86)).